The sequence spans 112 residues: Large ribosomal subunit protein bL17 (112 aa).

The protein belongs to the bacterial ribosomal protein bL17 family. Part of the 50S ribosomal subunit. Contacts protein L32.

In Desulfitobacterium hafniense (strain DSM 10664 / DCB-2), this protein is Large ribosomal subunit protein bL17.